The sequence spans 376 residues: Histidinol-phosphate aminotransferase 1 (376 aa).

The residue at position 235 (Lys235) is an N6-(pyridoxal phosphate)lysine.

This sequence belongs to the class-II pyridoxal-phosphate-dependent aminotransferase family. Histidinol-phosphate aminotransferase subfamily. Homodimer. Pyridoxal 5'-phosphate serves as cofactor.

It catalyses the reaction L-histidinol phosphate + 2-oxoglutarate = 3-(imidazol-4-yl)-2-oxopropyl phosphate + L-glutamate. It functions in the pathway amino-acid biosynthesis; L-histidine biosynthesis; L-histidine from 5-phospho-alpha-D-ribose 1-diphosphate: step 7/9. The sequence is that of Histidinol-phosphate aminotransferase 1 from Cupriavidus pinatubonensis (strain JMP 134 / LMG 1197) (Cupriavidus necator (strain JMP 134)).